A 160-amino-acid chain; its full sequence is UPF0178 protein BB1267 (160 aa).

This sequence belongs to the UPF0178 family.

The polypeptide is UPF0178 protein BB1267 (Bordetella bronchiseptica (strain ATCC BAA-588 / NCTC 13252 / RB50) (Alcaligenes bronchisepticus)).